The primary structure comprises 3172 residues: Erythronolide synthase EryA3 (3172 aa).

Residues 38 to 452 (GEPIAIVGMA…GTNAHVIVEE (415 aa)) enclose the Ketosynthase family 3 (KS3) 1 domain. Module regions lie at residues 41–1464 (IAIV…DHYL) and 1492–2891 (IAIV…DHIG). Cys-199 serves as the catalytic Acyl-thioester intermediate; for beta-ketoacyl synthase 1 activity. Active-site for beta-ketoacyl synthase 1 activity residues include His-334 and His-374. Residues 557–874 (VFPGQGAQWQ…LGEAYAQGVE (318 aa)) are acyltransferase 1. Catalysis depends on Ser-643, which acts as the Acyl-ester intermediate; for acyltransferase 1 activity. The tract at residues 1117-1294 (GTVLVTGGTG…VTSIAWGLWA (178 aa)) is beta-ketoacyl reductase 1. Residues 1125–1128 (TGGI), 1148–1151 (GRRG), 1177–1178 (DV), Lys-1229, and 1249–1250 (FS) contribute to the NADP(+) site. The active-site Acyl-ester intermediate; for beta-ketoacyl reductase 1 activity is the Tyr-1264. The region spanning 1392-1467 (EHLAHLIRAE…RLADHYLERL (76 aa)) is the Carrier 1 domain. O-(pantetheine 4'-phosphoryl)serine is present on Ser-1427. One can recognise a Ketosynthase family 3 (KS3) 2 domain in the interval 1489–1916 (DDPIAIVGMA…GTNAHVIIAE (428 aa)). The active-site Acyl-thioester intermediate; for beta-ketoacyl synthase 2 activity is Cys-1661. Active-site for beta-ketoacyl synthase 2 activity residues include His-1797 and His-1837. An acyltransferase 2 region spans residues 2022–2331 (VFVFPGQGAQ…LARAHVHGVA (310 aa)). The active-site Acyl-ester intermediate; for acyltransferase 2 activity is Ser-2112. The beta-ketoacyl reductase 2 stretch occupies residues 2557-2731 (GTALVTGGTG…ATSVAWGAWA (175 aa)). NADP(+)-binding positions include 2565-2568 (TGAL), 2588-2591 (SRRG), 2617-2618 (DV), Lys-2666, and 2686-2687 (FS). Tyr-2701 (acyl-ester intermediate; for beta-ketoacyl reductase 2 activity) is an active-site residue. In terms of domain architecture, Carrier 2 spans 2819 to 2894 (QELLEFTHSH…RLADHIGQQL (76 aa)). At Ser-2854 the chain carries O-(pantetheine 4'-phosphoryl)serine. The thioesterase stretch occupies residues 2960–3166 (ICCAGTAAIS…DAIARHIDAW (207 aa)). Thr-2965 is a substrate binding site. Residue Ser-3031 is the Nucleophile; for thioesterase activity of the active site. Ala-3032 and Asp-3058 together coordinate substrate. The Proton acceptor; for thioesterase activity role is filled by His-3148.

As to quaternary structure, homodimer. Erythronolide synthase is composed of EryAI, EryAII and EryAIII multimodular (2 modules) polypeptides each coding for a functional synthase subunit which participates in 2 of the six FAS-like elongation steps required for formation of the polyketide. Module 1, 2, 3, 4, 5, and 6 participating in biosynthesis steps 1, 2, 3, 4, 5, and 6, respectively. Pantetheine 4'-phosphate serves as cofactor.

The catalysed reaction is 6 (S)-methylmalonyl-CoA + propanoyl-CoA + 6 NADPH + 12 H(+) = 6-deoxyerythronolide B + 6 CO2 + 6 NADP(+) + 7 CoA + H2O. Its pathway is antibiotic biosynthesis; erythromycin biosynthesis. Its activity is regulated as follows. Inhibited by diphenyl phosphonates derivatives such as diphenyl allylphosphonate. Involved in the biosynthesis of antibiotic erythromycin via the biosynthesis of its aglycone precursor, 6-deoxyerythronolide B (6-dEB). In Saccharopolyspora erythraea (Streptomyces erythraeus), this protein is Erythronolide synthase EryA3.